The chain runs to 502 residues: Glucose-6-phosphate isomerase (502 aa).

The Proton donor role is filled by Glu331. Residues His362 and Lys471 contribute to the active site.

This sequence belongs to the GPI family.

It localises to the cytoplasm. It catalyses the reaction alpha-D-glucose 6-phosphate = beta-D-fructose 6-phosphate. The protein operates within carbohydrate biosynthesis; gluconeogenesis. Its pathway is carbohydrate degradation; glycolysis; D-glyceraldehyde 3-phosphate and glycerone phosphate from D-glucose: step 2/4. Functionally, catalyzes the reversible isomerization of glucose-6-phosphate to fructose-6-phosphate. This Xylella fastidiosa (strain M12) protein is Glucose-6-phosphate isomerase.